The primary structure comprises 134 residues: Ribosome-binding factor A (134 aa).

The protein belongs to the RbfA family. Monomer. Binds 30S ribosomal subunits, but not 50S ribosomal subunits or 70S ribosomes.

The protein localises to the cytoplasm. Its function is as follows. One of several proteins that assist in the late maturation steps of the functional core of the 30S ribosomal subunit. Associates with free 30S ribosomal subunits (but not with 30S subunits that are part of 70S ribosomes or polysomes). Required for efficient processing of 16S rRNA. May interact with the 5'-terminal helix region of 16S rRNA. The polypeptide is Ribosome-binding factor A (Baumannia cicadellinicola subsp. Homalodisca coagulata).